We begin with the raw amino-acid sequence, 504 residues long: MTADPDPPFVAVWNSVVAELNGDVNGDRQGDPSLPVLTPQQRAWLKLVKPLVIAEGFALLSVPTPFVQNEIERHLREPIVTALSRKLGQRVELGVRIATPTDEPEDAPDSFADSPAPASVPAGPADADEIDDDRDARVNAQESWPKYFSRPEPDTSSDDSNAVNLNRRYTFDTFVIGASNRFAHAATLAIAEAPARAYNPLFIWGESGLGKTHLLHAAGNYAQRLFPGMRVKYVSTEEFTNDFINSLRDDRKASFKRSYRDIDILLVDDIQFIEGKEGIQEEFFHTFNTLHNSNKQIVISSDRPPKQLATLEDRLRTRFEWGLITDVQPPELETRIAILRKKAQMDRLDVPDDVLELIASSIERNIRELEGALIRVTAFASLNKTRIDRSLAEVVLRDLIADATTMQISTAAIMAVTAEYFETTVEELRGPGKTRALAQSRQIAMYLCRELTDLSLPKIGQAFGRDHTTVMYAEKKIRGEMAERREVFDHVKELTTRIRQRAKR.

Residues 1 to 109 (MTADPDPPFV…PTDEPEDAPD (109 aa)) are domain I, interacts with DnaA modulators. The disordered stretch occupies residues 98-162 (ATPTDEPEDA…PDTSSDDSNA (65 aa)). Low complexity predominate over residues 109–125 (DSFADSPAPASVPAGPA). Residues 110 to 163 (SFADSPAPASVPAGPADADEIDDDRDARVNAQESWPKYFSRPEPDTSSDDSNAV) are domain II. Positions 164 to 380 (NLNRRYTFDT…GALIRVTAFA (217 aa)) are domain III, AAA+ region. Residues Gly208, Gly210, Lys211, and Thr212 each coordinate ATP. A domain IV, binds dsDNA region spans residues 381-504 (SLNKTRIDRS…TTRIRQRAKR (124 aa)).

Belongs to the DnaA family. In terms of assembly, oligomerizes as a right-handed, spiral filament on DNA at oriC.

The protein localises to the cytoplasm. In terms of biological role, plays an essential role in the initiation and regulation of chromosomal replication. ATP-DnaA binds to the origin of replication (oriC) to initiate formation of the DNA replication initiation complex once per cell cycle. Binds the DnaA box (a 9 base pair repeat at the origin) and separates the double-stranded (ds)DNA. Forms a right-handed helical filament on oriC DNA; dsDNA binds to the exterior of the filament while single-stranded (ss)DNA is stabiized in the filament's interior. The ATP-DnaA-oriC complex binds and stabilizes one strand of the AT-rich DNA unwinding element (DUE), permitting loading of DNA polymerase. After initiation quickly degrades to an ADP-DnaA complex that is not apt for DNA replication. Binds acidic phospholipids. The probable consensus sequence for the DnaA box of this bacterium is 5'-TT(G/C)TCCACA-3'. The protein is Chromosomal replication initiator protein DnaA of Mycolicibacterium smegmatis (strain ATCC 700084 / mc(2)155) (Mycobacterium smegmatis).